Reading from the N-terminus, the 140-residue chain is Transcription antitermination protein NusB (140 aa).

It belongs to the NusB family.

Its function is as follows. Involved in transcription antitermination. Required for transcription of ribosomal RNA (rRNA) genes. Binds specifically to the boxA antiterminator sequence of the ribosomal RNA (rrn) operons. This chain is Transcription antitermination protein NusB, found in Leptospira biflexa serovar Patoc (strain Patoc 1 / Ames).